The primary structure comprises 86 residues: Small ribosomal subunit protein bS20 (86 aa).

The segment at 1–25 (MANSASSRKRARQAVKRNKHNSQIR) is disordered. Basic residues predominate over residues 7 to 25 (SRKRARQAVKRNKHNSQIR).

This sequence belongs to the bacterial ribosomal protein bS20 family.

Binds directly to 16S ribosomal RNA. The protein is Small ribosomal subunit protein bS20 of Vesicomyosocius okutanii subsp. Calyptogena okutanii (strain HA).